Consider the following 252-residue polypeptide: Triosephosphate isomerase (252 aa).

Substrate is bound at residue 10 to 12; the sequence is NWK. His-96 functions as the Electrophile in the catalytic mechanism. Glu-168 acts as the Proton acceptor in catalysis. Substrate contacts are provided by residues Gly-174, Ser-214, and 235 to 236; that span reads GG.

The protein belongs to the triosephosphate isomerase family. In terms of assembly, homodimer.

The protein localises to the cytoplasm. The enzyme catalyses D-glyceraldehyde 3-phosphate = dihydroxyacetone phosphate. It participates in carbohydrate biosynthesis; gluconeogenesis. It functions in the pathway carbohydrate degradation; glycolysis; D-glyceraldehyde 3-phosphate from glycerone phosphate: step 1/1. Functionally, involved in the gluconeogenesis. Catalyzes stereospecifically the conversion of dihydroxyacetone phosphate (DHAP) to D-glyceraldehyde-3-phosphate (G3P). The sequence is that of Triosephosphate isomerase from Streptococcus gordonii (strain Challis / ATCC 35105 / BCRC 15272 / CH1 / DL1 / V288).